Consider the following 135-residue polypeptide: uncharacterized protein (135 aa).

4 helical membrane passes run 7–25 (WSAA…EWTI), 29–51 (ILLT…TGNI), 64–85 (VFIF…EVGI), and 89–108 (ALIF…ISIF).

The protein belongs to the bacteriophage holin family. Cp-1 holin subfamily.

The protein resides in the cell membrane. This is an uncharacterized protein from Halalkalibacterium halodurans (strain ATCC BAA-125 / DSM 18197 / FERM 7344 / JCM 9153 / C-125) (Bacillus halodurans).